The following is a 717-amino-acid chain: LVDRDPVKTSFEEWARPGHFSRTIAKGPETTTWIWNLHADAHDFDSHTSDLEEISRKVFSAHFGQLSIIFLWLSGMYFHGARFSNYEAWLSDPTHIGPSAQVVWPIVGQEILNGDVGGGFRGIQITSGFFQIWRASGITSELQLYCTAIGALVFAGLMLFAGWFHYHKAAPKLAWFQDVESMLNHHLAGLLGLGSLSWAGHQVHVSLPINQFLDAGVDPKEIPLPHEFILNRDLLAQLYPSFAEGATPFFTLNWSKYAEFLTFRGGLDPVTGGLWLTDIAHHHLAIAILFLIAGHMYRTNWGIGHGLKDILEAHKGPFTGQGHKGLYEILTTSWHAQLSLNLAMLGSLTIVVAHHMYSMPPYPYLAIDYGTQLSLFTHHMWIGGFLIVGAAAHAAIFMVRDYDPTTRYNDLLDRVLRHRDAIISHLNWACIFLGFHSFGLYIHNDTMSALGRPQDMFSDTAIQLQPIFAQWVQNTHALAPGATAPGATTSTSLTWGGGDLIAVGGKVALLPIPLGTADFLVHHIHAFTIHVTVLILLKGVLFARSSRLIPDKANLGFRFPCDGPGRGGTCQVSAWDHVFLGLFWMYNAISVVIFHFSWKMQSDVWGSISDQGVVTHITGGNFAQSSITINGWLRDFLWAQASQVIQSYGSSLSAYGLFFLGAHFVWAFSLMFLFSGRGYWQELIESIVWAHNKLKVAPATQPRALSIVQGRAVGVTH.

8 consecutive transmembrane segments (helical) span residues 58–81 (VFSA…FHGA), 144–167 (LYCT…FHYH), 183–207 (LNHH…HVSL), 279–297 (IAHH…GHMY), 334–357 (WHAQ…HHMY), 373–399 (LSLF…IFMV), 421–443 (AIIS…LYIH), and 519–537 (FLVH…LILL). 2 residues coordinate [4Fe-4S] cluster: cysteine 561 and cysteine 570. Helical transmembrane passes span 577 to 598 (HVFL…HFSW) and 652 to 674 (LSAY…MFLF). Histidine 663 contributes to the chlorophyll a' binding site. Methionine 671 and tyrosine 679 together coordinate chlorophyll a. Residue tryptophan 680 coordinates phylloquinone. A helical transmembrane segment spans residues 712–717 (AVGVTH).

This sequence belongs to the PsaA/PsaB family. The PsaA/B heterodimer binds the P700 chlorophyll special pair and subsequent electron acceptors. PSI consists of a core antenna complex that captures photons, and an electron transfer chain that converts photonic excitation into a charge separation. The eukaryotic PSI reaction center is composed of at least 11 subunits. Requires P700 is a chlorophyll a/chlorophyll a' dimer, A0 is one or more chlorophyll a, A1 is one or both phylloquinones and FX is a shared 4Fe-4S iron-sulfur center. as cofactor.

The protein resides in the plastid. Its subcellular location is the chloroplast thylakoid membrane. The catalysed reaction is reduced [plastocyanin] + hnu + oxidized [2Fe-2S]-[ferredoxin] = oxidized [plastocyanin] + reduced [2Fe-2S]-[ferredoxin]. Functionally, psaA and PsaB bind P700, the primary electron donor of photosystem I (PSI), as well as the electron acceptors A0, A1 and FX. PSI is a plastocyanin-ferredoxin oxidoreductase, converting photonic excitation into a charge separation, which transfers an electron from the donor P700 chlorophyll pair to the spectroscopically characterized acceptors A0, A1, FX, FA and FB in turn. Oxidized P700 is reduced on the lumenal side of the thylakoid membrane by plastocyanin. The protein is Photosystem I P700 chlorophyll a apoprotein A1 of Drimys winteri (Winter's bark).